We begin with the raw amino-acid sequence, 115 residues long: Cytochrome c oxidase assembly protein COX16 homolog, mitochondrial (115 aa).

At 1–6 the chain is on the mitochondrial matrix side; the sequence is MSRLKF. Residues 7–29 traverse the membrane as a helical segment; sequence VRVGLPFFAIVLGSAYGLHFFQQ. The Mitochondrial intermembrane portion of the chain corresponds to 30–115; that stretch reads VRFDFRKIKQ…RKVRELKSNV (86 aa).

This sequence belongs to the COX16 family.

The protein resides in the mitochondrion inner membrane. Functionally, required for the assembly of the mitochondrial respiratory chain complex IV (CIV), also known as cytochrome c oxidase. The sequence is that of Cytochrome c oxidase assembly protein COX16 homolog, mitochondrial from Caenorhabditis elegans.